The sequence spans 372 residues: NAD(P)H-quinone oxidoreductase subunit 1 (372 aa).

8 helical membrane-spanning segments follow: residues 27 to 47 (LIWL…GVLV), 97 to 117 (LLFT…WLIV), 128 to 148 (VGIG…GLLM), 166 to 186 (AAQS…VVMM), 204 to 224 (LLSW…ICAL), 266 to 286 (VLSS…PIPV), 308 to 328 (SVGI…AILL), and 347 to 367 (FLLP…LAFP).

It belongs to the complex I subunit 1 family. In terms of assembly, NDH-1 is composed of at least 11 different subunits.

Its subcellular location is the cellular thylakoid membrane. It carries out the reaction a plastoquinone + NADH + (n+1) H(+)(in) = a plastoquinol + NAD(+) + n H(+)(out). It catalyses the reaction a plastoquinone + NADPH + (n+1) H(+)(in) = a plastoquinol + NADP(+) + n H(+)(out). Its function is as follows. NDH-1 shuttles electrons from an unknown electron donor, via FMN and iron-sulfur (Fe-S) centers, to quinones in the respiratory and/or the photosynthetic chain. The immediate electron acceptor for the enzyme in this species is believed to be plastoquinone. Couples the redox reaction to proton translocation, and thus conserves the redox energy in a proton gradient. The chain is NAD(P)H-quinone oxidoreductase subunit 1 from Prochlorococcus marinus (strain MIT 9313).